The primary structure comprises 277 residues: MASEYTTSEYIKHHLTNATMCSTDNGIAFNKACSDAGFWAWHVDTLAWSIGLGLLFLIIFRSVASKATTGVPGKMQAFVELVVEFVDDNVKSTFHGKSALIAPLALTIFVWVLLMNLMDLVPVDLIPWVSGLIGQAAFGMDPHDVYNKAVPTTDLNLTFALASGVFILILFYSIKMKGIGGFAKELTMQPFGHPIFIPVNFILETVTLLARPLSLALRLFGNLYASELIFILIATIGYFQLPLHFMWAVFHILVLPLQAFIFMMLTIVYLSLACEDH.

A run of 5 helical transmembrane segments spans residues 40–60 (AWHV…LIIF), 98–118 (SALI…MNLM), 154–174 (DLNL…FYSI), 219–239 (LFGN…IGYF), and 245–265 (FMWA…FMML).

This sequence belongs to the ATPase A chain family. In terms of assembly, F-type ATPases have 2 components, CF(1) - the catalytic core - and CF(0) - the membrane proton channel. CF(1) has five subunits: alpha(3), beta(3), gamma(1), delta(1), epsilon(1). CF(0) has three main subunits: a(1), b(2) and c(9-12). The alpha and beta chains form an alternating ring which encloses part of the gamma chain. CF(1) is attached to CF(0) by a central stalk formed by the gamma and epsilon chains, while a peripheral stalk is formed by the delta and b chains.

The protein resides in the cell inner membrane. In terms of biological role, key component of the proton channel; it plays a direct role in the translocation of protons across the membrane. In Alteromonas mediterranea (strain DSM 17117 / CIP 110805 / LMG 28347 / Deep ecotype), this protein is ATP synthase subunit a.